The following is a 126-amino-acid chain: Large ribosomal subunit protein bL20 (126 aa).

Basic residues predominate over residues 1–15 (MARVKRAVNAQKKRR). The tract at residues 1–20 (MARVKRAVNAQKKRRTTLER) is disordered.

The protein belongs to the bacterial ribosomal protein bL20 family.

In terms of biological role, binds directly to 23S ribosomal RNA and is necessary for the in vitro assembly process of the 50S ribosomal subunit. It is not involved in the protein synthesizing functions of that subunit. The sequence is that of Large ribosomal subunit protein bL20 from Beutenbergia cavernae (strain ATCC BAA-8 / DSM 12333 / CCUG 43141 / JCM 11478 / NBRC 16432 / NCIMB 13614 / HKI 0122).